We begin with the raw amino-acid sequence, 349 residues long: Anthranilate phosphoribosyltransferase (349 aa).

Residues Gly-82, 85–86 (GD), 92–95 (NVSS), 110–118 (KHGNRAVSG), and Ser-122 each bind 5-phospho-alpha-D-ribose 1-diphosphate. Gly-82 is an anthranilate binding site. Ser-94 serves as a coordination point for Mg(2+). Residue Asn-113 coordinates anthranilate. Arg-168 serves as a coordination point for anthranilate. Mg(2+) is bound by residues Asp-227 and Glu-228.

Belongs to the anthranilate phosphoribosyltransferase family. As to quaternary structure, homodimer. The cofactor is Mg(2+).

The catalysed reaction is N-(5-phospho-beta-D-ribosyl)anthranilate + diphosphate = 5-phospho-alpha-D-ribose 1-diphosphate + anthranilate. The protein operates within amino-acid biosynthesis; L-tryptophan biosynthesis; L-tryptophan from chorismate: step 2/5. Its function is as follows. Catalyzes the transfer of the phosphoribosyl group of 5-phosphorylribose-1-pyrophosphate (PRPP) to anthranilate to yield N-(5'-phosphoribosyl)-anthranilate (PRA). This chain is Anthranilate phosphoribosyltransferase, found in Pseudomonas paraeruginosa (strain DSM 24068 / PA7) (Pseudomonas aeruginosa (strain PA7)).